The following is a 440-amino-acid chain: Actin-like protein 7A (440 aa).

Residues 1 to 29 (MSLDGVWAPQTANIGDGPAKKASDQASMQ) form a disordered region. The segment at 36-56 (ASLKDGPAKRAVWVRRDNAET) is required for interaction with TES.

The protein belongs to the actin family. As to quaternary structure, interacts (via N-terminus) with TES (via LIM domain 2). Heterodimer with TES; the heterodimer interacts with ENAH to form a heterotrimer. Interacts with ACTL9. Interacts with CYLC1; the interaction may be relevant for proper acrosome attachment to the nuclear envelope. As to expression, detected in testis. Detected at the acrosome of round spermatids (at protein level). Detected in adult and embryonic testis. Detected in developing male germ cells.

Its subcellular location is the cytoplasm. It localises to the cytoskeleton. The protein resides in the golgi apparatus. It is found in the nucleus. The protein localises to the cytoplasmic vesicle. Its subcellular location is the secretory vesicle. It localises to the acrosome. Its function is as follows. Essential for normal spermatogenesis and male fertility. Required for normal sperm head morphology, acroplaxome formation, acrosome attachment, and acrosome granule stability. May anchor and stabilize acrosomal adherence to the acroplaxome at least in part by facilitating the presence of F-actin in the subacrosomal space. May play an important role in formation and fusion of Golgi-derived vesicles during acrosome biogenesis. This Mus musculus (Mouse) protein is Actin-like protein 7A (Actl7a).